The primary structure comprises 397 residues: MNIHEYQAKALLKGYGAPVAEGVAILKVEEAEAAAKQLPGPLYVVKSQIHAGGRGKGKFKELGPDAKGGVRLAKSIEEVVSHSRDMLGNTLVTAQTGDAGKQVNRLYIEDGADIARELYCSLLVDRSVGQVAFVVSTEGGMDIEAVAHDTPEKIHTIAINPEKGVSDADVAAISKALELDGVAAEDAKALFPILYKAFNEKDMALLEVNPLIVMENGHLRVLDAKMSFDGNALFRHEDVKALRDETEEDAKEIEASKWDLAYVALDGNIGCMVNGAGLAMATMDIIKLYGKEPANFCDVGGGAGKEKVAAAFKIITADPKVEGILVNIFGGIMKCDVIAEGVIAAVKEVGLQVPLVVRLEGTNVELGKKLLNESGLAITAADDLDDAAKKIVAAING.

One can recognise an ATP-grasp domain in the interval 9–254 (KALLKGYGAP…ETEEDAKEIE (246 aa)). Residues K46, 53 to 55 (GRG), E109, A112, and E117 contribute to the ATP site. N209 and D223 together coordinate Mg(2+). Residues N274 and 331 to 333 (GIM) each bind substrate.

The protein belongs to the succinate/malate CoA ligase beta subunit family. In terms of assembly, heterotetramer of two alpha and two beta subunits. Mg(2+) is required as a cofactor.

The catalysed reaction is succinate + ATP + CoA = succinyl-CoA + ADP + phosphate. It catalyses the reaction GTP + succinate + CoA = succinyl-CoA + GDP + phosphate. It functions in the pathway carbohydrate metabolism; tricarboxylic acid cycle; succinate from succinyl-CoA (ligase route): step 1/1. Its function is as follows. Succinyl-CoA synthetase functions in the citric acid cycle (TCA), coupling the hydrolysis of succinyl-CoA to the synthesis of either ATP or GTP and thus represents the only step of substrate-level phosphorylation in the TCA. The beta subunit provides nucleotide specificity of the enzyme and binds the substrate succinate, while the binding sites for coenzyme A and phosphate are found in the alpha subunit. In Agrobacterium fabrum (strain C58 / ATCC 33970) (Agrobacterium tumefaciens (strain C58)), this protein is Succinate--CoA ligase [ADP-forming] subunit beta.